The sequence spans 508 residues: Photosystem II CP47 reaction center protein (508 aa).

The next 6 helical transmembrane spans lie at 21–36, 101–115, 140–156, 203–218, 237–252, and 457–472; these read AVHL…WAGS, IVLS…IWHW, GIHL…FGAF, IAAG…FHLC, VLSS…AFVV, and CFAL…HGAR.

Belongs to the PsbB/PsbC family. PsbB subfamily. As to quaternary structure, PSII is composed of 1 copy each of membrane proteins PsbA, PsbB, PsbC, PsbD, PsbE, PsbF, PsbH, PsbI, PsbJ, PsbK, PsbL, PsbM, PsbT, PsbX, PsbY, PsbZ, Psb30/Ycf12, at least 3 peripheral proteins of the oxygen-evolving complex and a large number of cofactors. It forms dimeric complexes. It depends on Binds multiple chlorophylls. PSII binds additional chlorophylls, carotenoids and specific lipids. as a cofactor.

The protein localises to the plastid. It is found in the chloroplast thylakoid membrane. Functionally, one of the components of the core complex of photosystem II (PSII). It binds chlorophyll and helps catalyze the primary light-induced photochemical processes of PSII. PSII is a light-driven water:plastoquinone oxidoreductase, using light energy to abstract electrons from H(2)O, generating O(2) and a proton gradient subsequently used for ATP formation. In Chlorella vulgaris (Green alga), this protein is Photosystem II CP47 reaction center protein.